Here is a 245-residue protein sequence, read N- to C-terminus: Complement C1q subcomponent subunit C (245 aa).

The signal sequence occupies residues 1–28 (MDVGPSSLPHLGLKLLLLLLLLPLRGQA). In terms of domain architecture, Collagen-like spans 31-112 (GCYGIPGMPG…GIPGEPGEEG (82 aa)). 4-hydroxyproline occurs at positions 36, 39, 42, 45, 54, and 63. Residues 45 to 113 (PGKDGYDGLP…IPGEPGEEGR (69 aa)) form a disordered region. A compositionally biased stretch (low complexity) spans 54–71 (PGPKGEPGIPAIPGIRGP). Residue Lys-75 is modified to 5-hydroxylysine. Lys-75 carries O-linked (Gal...) hydroxylysine glycosylation. A 4-hydroxyproline mark is found at Pro-81, Pro-93, Pro-96, Pro-99, and Pro-105. Residues 90–99 (MGPPGMPGVP) show a composition bias toward pro residues. One can recognise a C1q domain in the interval 115–245 (KQKFQSVFTV…VFSGFLLFPD (131 aa)). Cys-179 and Cys-193 form a disulfide bridge.

In terms of assembly, core component of the complement C1 complex, a calcium-dependent complex composed of 1 molecule of the C1Q subcomplex, 2 molecules of C1R and 2 molecules of C1S. The C1Q subcomplex is composed 18 subunits: 3 chains of C1QA, C1QB, and C1QC trimerize to form 6 collagen-like triple helices connected to six globular ligand-recognition modules (C1q domain). Post-translationally, O-linked glycans consist of Glc-Gal disaccharides bound to the oxygen atom of post-translationally added hydroxyl groups.

It localises to the secreted. The protein localises to the cell surface. With respect to regulation, the C1Q subcomplex is inhibited by sulfated molecules, such as triterpenoid sulfates, heparan sulfate, or chondroitin sulfates. In terms of biological role, core component of the complement C1 complex, a multiprotein complex that initiates the classical pathway of the complement system, a cascade of proteins that leads to phagocytosis and breakdown of pathogens and signaling that strengthens the adaptive immune system. The classical complement pathway is initiated by the C1Q subcomplex of the C1 complex, which specifically binds IgG or IgM immunoglobulins complexed with antigens, forming antigen-antibody complexes on the surface of pathogens: C1QA, together with C1QB and C1QC, specifically recognizes and binds the Fc regions of IgG or IgM via its C1q domain. Immunoglobulin-binding activates the proenzyme C1R, which cleaves C1S, initiating the proteolytic cascade of the complement system. The C1Q subcomplex is activated by a hexamer of IgG complexed with antigens, while it is activated by a pentameric IgM. The C1Q subcomplex also recognizes and binds phosphatidylserine exposed on the surface of cells undergoing programmed cell death, possibly promoting activation of the complement system. This is Complement C1q subcomponent subunit C from Homo sapiens (Human).